Consider the following 535-residue polypeptide: MFSWLGNDDRRKKDPEVFQTVSDGLKKLYKTKLLPLEEYYRFHEFHSPALEDADFDNKPMVLLVGQYSTGKTTFIRYLLEQDFPGMRIGPEPTTDSFIAVMQGDVEGIIPGNALVVDPKKPFRKLNAFGNAFLNRFVCAQLPNAVLESISVIDTPGILSGEKQRISRGYDFAAVLEWFAERVDRIILLFDAHKLDISDEFSEVIKALKNHEDKMRVVLNKADQIETQQLMRVYGALMWSLGKIVNTPEVIRVYIGSFWSHPLLIPDNRKLFEAEEQDLFRDIQSLPRNAALRKLNDLIKRARLAKVHAYIISSLKKEMPSVFGKDTKKKELVNNLAEIYGRIEREHQISPGDFPNLKRMQDQLQAQDFSKFQPLKSKLLEVVDDMLAHDIAQLMVLVRQEETQRPVQMVKGGAFEGTLQGPFGHGYGEGAGEGIDDAEWVVARDKPMYDEIFYTLSPVDGKITGANAKKEMVRSKLPNSVLGKIWKLADIDKDGMLDDEEFALANHLIKVKLEGHELPSELPAHLLPPSKRKVSE.

Methionine 1 carries the N-acetylmethionine modification. A Dynamin-type G domain is found at 55-286 (FDNKPMVLLV…DLFRDIQSLP (232 aa)). The tract at residues 65–72 (GQYSTGKT) is G1 motif. 65-72 (GQYSTGKT) serves as a coordination point for ATP. The segment at 91-92 (EP) is G2 motif. Residues 153–156 (DTPG) form a G3 motif region. Residues 198–227 (DEFSEVIKALKNHEDKMRVVLNKADQIETQ) are a coiled coil. A G4 motif region spans residues 219–222 (NKAD). Residue lysine 220 coordinates ATP. Position 243 (isoleucine 243) is a region of interest, G5 motif. Tryptophan 258 serves as a coordination point for ATP. A Glycyl lysine isopeptide (Lys-Gly) (interchain with G-Cter in SUMO) cross-link involves residue lysine 315. 2 positions are modified to phosphoserine: serine 349 and serine 456. The EH domain maps to 444–532 (DKPMYDEIFY…AHLLPPSKRK (89 aa)). Residues 476–511 (LPNSVLGKIWKLADIDKDGMLDDEEFALANHLIKVK) form the EF-hand domain. Ca(2+) contacts are provided by aspartate 489, aspartate 491, aspartate 493, methionine 495, and glutamate 500. Lysine 511 is covalently cross-linked (Glycyl lysine isopeptide (Lys-Gly) (interchain with G-Cter in SUMO)).

It belongs to the TRAFAC class dynamin-like GTPase superfamily. Dynamin/Fzo/YdjA family. EHD subfamily. As to quaternary structure, homooligomer. Heterooligomer with EHD1. Heterooligomer with EHD2 and EHD4; ATP-binding is required for heterooligomerization. Interacts with PACSIN1. Interacts with PACSIN2. Interacts (via EH domain) with MICALL1. Interacts (via EH domain) with RAB11FIP2. Interacts with ANK2. Interacts with CACNA1GG and CACNA1H. Strong expression seen in the kidney, brain and liver. In the kidney, expressed exclusively by glomerular endothelial cells; at protein level. Expressed in skeletal muscle neuromuscular junction perisynaptic region; at protein level.

It is found in the recycling endosome membrane. The protein resides in the cell membrane. Its subcellular location is the cell projection. The protein localises to the cilium membrane. It localises to the cytoplasmic vesicle. Functionally, ATP- and membrane-binding protein that controls membrane reorganization/tubulation upon ATP hydrolysis. In vitro causes tubulation of endocytic membranes. Binding to phosphatidic acid induces its membrane tubulation activity. Plays a role in endocytic transport. Involved in early endosome to recycling endosome compartment (ERC), retrograde early endosome to Golgi, and endosome to plasma membrane (rapid recycling) protein transport. Involved in the regulation of Golgi maintenance and morphology. Involved in the recycling of internalized D1 dopamine receptor. Plays a role in cardiac protein trafficking probably implicating ANK2. Involved in the ventricular membrane targeting of SLC8A1 and CACNA1C and probably the atrial membrane localization of CACNA1GG and CACNA1H implicated in the regulation of atrial myocyte excitability and cardiac conduction. In conjunction with EHD4 may be involved in endocytic trafficking of KDR/VEGFR2 implicated in control of glomerular function. Involved in the rapid recycling of integrin beta-3 implicated in cell adhesion maintenance. Involved in the unidirectional retrograde dendritic transport of endocytosed BACE1 and in efficient sorting of BACE1 to axons implicating a function in neuronal APP processing. Plays a role in the formation of the ciliary vesicle, an early step in cilium biogenesis; possibly sharing redundant functions with Ehd1. This chain is EH domain-containing protein 3, found in Mus musculus (Mouse).